The following is a 249-amino-acid chain: MQREEKQLDMLLEAVLNRLNDLKHSIGVMIHRLETEYETINWPTFLDNFALISSHLTGLMKILSTEIGTPLRNLTVLPLMLTPERDEALLQLTEGRVPIFSHDLAPDYLRTKPDPGAESRQAAHEAKANNLTVEASMKQVAQYNKVISHVWDIISKAKEDWENESSTRPGIQQTSSMADTQALVAAVGLGNGLTAPVGPPTGAGVMIPPAIRQGSPMSAVSPSGNAPMGKMPSGIKTNIKSANQVHPYR.

The stretch at methionine 1–isoleucine 26 forms a coiled coil. 2 stretches are compositionally biased toward polar residues: residues serine 215 to glycine 224 and isoleucine 235 to arginine 249. The segment at serine 215–arginine 249 is disordered.

The protein belongs to the Mediator complex subunit 8 family. In terms of assembly, component of the Mediator complex.

It is found in the nucleus. Its function is as follows. Component of the Mediator complex, a coactivator involved in the regulated transcription of nearly all RNA polymerase II-dependent genes. Mediator functions as a bridge to convey information from gene-specific regulatory proteins to the basal RNA polymerase II transcription machinery. Mediator is recruited to promoters by direct interactions with regulatory proteins and serves as a scaffold for the assembly of a functional preinitiation complex with RNA polymerase II and the general transcription factors. This chain is Mediator of RNA polymerase II transcription subunit 8 (MED8), found in Anopheles gambiae (African malaria mosquito).